The following is a 299-amino-acid chain: Prohibitin-2 (299 aa).

Ala2 carries the N-acetylalanine modification. The segment at 19–49 (MGTALKLLLGAGAVAYGVRESVFTVEGGHRA) is necessary for transcriptional repression. At Tyr128 the chain carries Phosphotyrosine. Lys147 is subject to N6-acetyllysine. Residues 150–174 (ASQLITQRAQVSLLIRRELTERAKD) are necessary for transcriptional repression. Position 151 is a phosphoserine (Ser151). Positions 190–238 (SREYTAAVEAKQVAQQEAQRAQFLVEKAKQEQRQKIVQAEGEAEAAKML) form a coiled coil. An N6-acetyllysine mark is found at Lys200, Lys236, Lys250, and Lys262.

This sequence belongs to the prohibitin family. In terms of assembly, the mitochondrial prohibitin complex consists of two subunits (PHB1 and PHB2), assembled into a membrane-associated ring-shaped supercomplex of approximately 1 mDa. Interacts with ESR1, HDAC1 and HDAC5. Interacts with ZNF703. Interacts with STOML2. Interacts with ARFGEF3. Interacts with SPHK2. Interacts with COX4I1; the interaction associates PHB2 with COX. Interacts with MAP1LC3B (membrane-bound form LC3-II); the interaction is direct and upon mitochondrial depolarization and proteasome-dependent outer membrane rupture. Interacts with IGFBP6 (via C-terminal domain). Interacts with CLPB. Interacts with CD86 (via cytoplasmic domain); the interactions increases after priming with CD40. Interacts with AFG3L2. Interacts with DNAJC19. Interacts with AKT2; this interaction may be important for myogenic differentiation. In terms of processing, phosphorylated. Tyrosine phosphorylation is indirectly stimulated by IGFBP6.

The protein resides in the mitochondrion inner membrane. It is found in the cytoplasm. It localises to the nucleus. Its subcellular location is the cell membrane. Functionally, protein with pleiotropic attributes mediated in a cell-compartment- and tissue-specific manner, which include the plasma membrane-associated cell signaling functions, mitochondrial chaperone, and transcriptional co-regulator of transcription factors and sex steroid hormones in the nucleus. In the mitochondria, together with PHB, forms large ring complexes (prohibitin complexes) in the inner mitochondrial membrane (IMM) and functions as a chaperone protein that stabilizes mitochondrial respiratory enzymes and maintains mitochondrial integrity in the IMM, which is required for mitochondrial morphogenesis, neuronal survival, and normal lifespan. The prohibitin complex, with DNAJC19, regulates cardiolipin remodeling and the protein turnover of OMA1 in a cardiolipin-binding manner. Also regulates cytochrome-c oxidase assembly (COX) and mitochondrial respiration. Binding to sphingoid 1-phosphate (SPP) modulates its regulator activity. Has a key role of mitophagy receptor involved in targeting mitochondria for autophagic degradation. Involved in mitochondrial-mediated antiviral innate immunity, activates RIG-I-mediated signal transduction and production of IFNB1 and pro-inflammatory cytokine IL6. In terms of biological role, in the nucleus, serves as transcriptional co-regulator. Acts as a mediator of transcriptional repression by nuclear hormone receptors via recruitment of histone deacetylases. Functions as an estrogen receptor (ER)-selective coregulator that potentiates the inhibitory activities of antiestrogens and represses the activity of estrogens. Competes with NCOA1 for modulation of ER transcriptional activity. Its function is as follows. In the plasma membrane, is involved in IGFBP6-induced cell migration. Cooperates with CD86 to mediate CD86-signaling in B lymphocytes that regulates the level of IgG1 produced through the activation of distal signaling intermediates. Upon CD40 engagement, required to activate NF-kappa-B signaling pathway via phospholipase C and protein kinase C activation. This chain is Prohibitin-2 (PHB2), found in Pongo abelii (Sumatran orangutan).